The following is a 318-amino-acid chain: Energy-coupling factor transporter ATP-binding protein EcfA2 (318 aa).

Residues 22–271 (LRAQGLKCVF…PEIMQTTSIA (250 aa)) enclose the ABC transporter domain. 59-66 (GNSGSGKS) serves as a coordination point for ATP.

It belongs to the ABC transporter superfamily. Energy-coupling factor EcfA family. In terms of assembly, forms a stable energy-coupling factor (ECF) transporter complex composed of 2 membrane-embedded substrate-binding proteins (S component), 2 ATP-binding proteins (A component) and 2 transmembrane proteins (T component).

The protein localises to the cell membrane. In terms of biological role, ATP-binding (A) component of a common energy-coupling factor (ECF) ABC-transporter complex. Unlike classic ABC transporters this ECF transporter provides the energy necessary to transport a number of different substrates. The polypeptide is Energy-coupling factor transporter ATP-binding protein EcfA2 (Mycoplasmoides gallisepticum (strain R(low / passage 15 / clone 2)) (Mycoplasma gallisepticum)).